A 121-amino-acid chain; its full sequence is MRHAKRGRKLGRDAAHRNLMLGTMAGQLITHGRIKTTEAKAKELRGVVDRLINIAKRDDLHARRQAVKVLKDKRVVRHLFEEVAPDLDDRTSGYTRILKLGPRQGDGAEQVYLELVNHRVE.

It belongs to the bacterial ribosomal protein bL17 family. As to quaternary structure, part of the 50S ribosomal subunit. Contacts protein L32.

This Rubrobacter xylanophilus (strain DSM 9941 / JCM 11954 / NBRC 16129 / PRD-1) protein is Large ribosomal subunit protein bL17.